Here is a 279-residue protein sequence, read N- to C-terminus: Elongation factor Ts (279 aa).

Residues 80 to 83 (TDFV) are involved in Mg(2+) ion dislocation from EF-Tu.

It belongs to the EF-Ts family.

It is found in the cytoplasm. Its function is as follows. Associates with the EF-Tu.GDP complex and induces the exchange of GDP to GTP. It remains bound to the aminoacyl-tRNA.EF-Tu.GTP complex up to the GTP hydrolysis stage on the ribosome. The chain is Elongation factor Ts (tsf) from Borreliella burgdorferi (strain ATCC 35210 / DSM 4680 / CIP 102532 / B31) (Borrelia burgdorferi).